We begin with the raw amino-acid sequence, 1233 residues long: Structural maintenance of chromosomes protein 1A (1233 aa).

32-39 (GPNGSGKS) lines the ATP pocket. 2 coiled-coil regions span residues 104 to 124 (EYKI…LEKL) and 163 to 503 (ELAQ…KAEI). The segment covering 284 to 293 (IKEKDSELNQ) has biased composition (basic and acidic residues). 2 disordered regions span residues 284–308 (IKEK…TSHK) and 348–369 (QEFE…TLEE). Phosphoserine is present on residues Ser358 and Ser360. Residues 515–629 (VYGRLIDLCQ…DNVEDARRIA (115 aa)) form the SMC hinge domain. Residues Lys648 and Lys713 each carry the N6-acetyllysine modification. Positions 660–935 (KAKARRWDEK…RHNLLQACKM (276 aa)) form a coiled coil. The interval 947 to 968 (MDDISQEEGSSQGEDSVSGSQR) is disordered. The segment covering 953–967 (EEGSSQGEDSVSGSQ) has biased composition (low complexity). Ser957, Ser962, Ser966, and Ser970 each carry phosphoserine. Residues 991-1068 (KDAQAEEEIK…FEQIKKERFD (78 aa)) adopt a coiled-coil conformation. Lys1037 is subject to N6-acetyllysine.

Belongs to the SMC family. SMC1 subfamily. Forms a heterodimer with SMC3 in cohesin complexes. Cohesin complexes are composed of the SMC1 (SMC1A or meiosis-specific SMC1B) and SMC3 heterodimer attached via their SMC hinge domain, RAD21 which link them, and one STAG protein (STAG1, STAG2 or meiosis-specific STAG3), which interacts with RAD21. In germ cell cohesin complexes, SMC1A is mutually exclusive with SMC1B. Found in a complex with CDCA5, SMC3 and RAD21, PDS5A/SCC-112 and PDS5B/APRIN. Interacts with NDC80, SYCP2, STAG3, BRCA1 and BRAT1. The cohesin complex interacts with the cohesin loading complex subunits NIPBL/Scc2 (via HEAT repeats) and MAU2/Scc4. NIPBL directly contacts all members of the complex, RAD21, SMC1A/B, SMC3 and STAG1. Interacts with RPGR. Found in a complex containing POLE and SMC3. In terms of processing, phosphorylated upon ionizing radiation or DNA methylation. Phosphorylation of Ser-957 and Ser-966 activates it and is required for S-phase checkpoint activation. Post-translationally, ubiquitinated by the DCX(DCAF15) complex, leading to its degradation.

The protein localises to the nucleus. It is found in the chromosome. It localises to the centromere. Functionally, involved in chromosome cohesion during cell cycle and in DNA repair. Involved in DNA repair via its interaction with BRCA1 and its related phosphorylation by ATM, and works as a downstream effector in the ATM/NBS1 branch of S-phase checkpoint. Central component of cohesin complex. The cohesin complex is required for the cohesion of sister chromatids after DNA replication. The cohesin complex apparently forms a large proteinaceous ring within which sister chromatids can be trapped. At anaphase, the complex is cleaved and dissociates from chromatin, allowing sister chromatids to segregate. The cohesin complex may also play a role in spindle pole assembly during mitosis. Involved in DNA repair via its interaction with BRCA1 and its related phosphorylation by ATM, or via its phosphorylation by ATR. Works as a downstream effector both in the ATM/NBS1 branch and in the ATR/MSH2 branch of S-phase checkpoint. This is Structural maintenance of chromosomes protein 1A (SMC1A) from Bos taurus (Bovine).